Consider the following 503-residue polypeptide: Putative (R)-citramalate synthase CimA (503 aa).

Residues 9–257 form the Pyruvate carboxyltransferase domain; the sequence is IRFFDTTLRD…DTGIATEELY (249 aa).

It belongs to the alpha-IPM synthase/homocitrate synthase family. In terms of assembly, homodimer.

The enzyme catalyses pyruvate + acetyl-CoA + H2O = (3R)-citramalate + CoA + H(+). It participates in amino-acid biosynthesis; L-isoleucine biosynthesis; 2-oxobutanoate from pyruvate: step 1/3. In terms of biological role, catalyzes the condensation of pyruvate and acetyl-coenzyme A to form (R)-citramalate. This Methanoculleus marisnigri (strain ATCC 35101 / DSM 1498 / JR1) protein is Putative (R)-citramalate synthase CimA.